Reading from the N-terminus, the 423-residue chain is Mannose-6-phosphate isomerase (423 aa).

Ala2 is modified (N-acetylalanine). A phosphoserine mark is found at Ser102 and Ser108. Residues Gln110, His112, Glu137, and His276 each coordinate Zn(2+). Arg295 is a catalytic residue.

This sequence belongs to the mannose-6-phosphate isomerase type 1 family. Zn(2+) serves as cofactor.

The protein localises to the cytoplasm. The enzyme catalyses D-mannose 6-phosphate = D-fructose 6-phosphate. It participates in nucleotide-sugar biosynthesis; GDP-alpha-D-mannose biosynthesis; alpha-D-mannose 1-phosphate from D-fructose 6-phosphate: step 1/2. Functionally, isomerase that catalyzes the interconversion of fructose-6-P and mannose-6-P and has a critical role in the supply of D-mannose derivatives required for many eukaryotic glycosylation reactions. The chain is Mannose-6-phosphate isomerase (MPI) from Bos taurus (Bovine).